A 307-amino-acid chain; its full sequence is Ribonuclease Z (307 aa).

Zn(2+) is bound by residues His-61, His-63, Asp-65, His-66, His-138, Asp-207, and His-265. The active-site Proton acceptor is Asp-65.

The protein belongs to the RNase Z family. Homodimer. The cofactor is Zn(2+).

The enzyme catalyses Endonucleolytic cleavage of RNA, removing extra 3' nucleotides from tRNA precursor, generating 3' termini of tRNAs. A 3'-hydroxy group is left at the tRNA terminus and a 5'-phosphoryl group is left at the trailer molecule.. Functionally, zinc phosphodiesterase, which displays some tRNA 3'-processing endonuclease activity. Probably involved in tRNA maturation, by removing a 3'-trailer from precursor tRNA. This is Ribonuclease Z from Methanothermobacter thermautotrophicus (strain ATCC 29096 / DSM 1053 / JCM 10044 / NBRC 100330 / Delta H) (Methanobacterium thermoautotrophicum).